We begin with the raw amino-acid sequence, 875 residues long: Translation initiation factor IF-2 (875 aa).

Disordered regions lie at residues 123–204 and 240–278; these read EKEK…EKPK and ETKE…PVET. The span at 240–252 shows a compositional bias: basic and acidic residues; it reads ETKEEKAELEALR. Basic residues predominate over residues 259 to 268; it reads PKKKKKKKKK. Residues 269 to 278 are compositionally biased toward basic and acidic residues; that stretch reads KEEEKAPVET. One can recognise a tr-type G domain in the interval 379–547; sequence ERPPVVTVMG…NILLVSEILE (169 aa). Residues 388-395 form a G1 region; it reads GHVDHGKT. 388–395 is a GTP binding site; it reads GHVDHGKT. The G2 stretch occupies residues 413–417; that stretch reads GITQH. A G3 region spans residues 435-438; the sequence is DTPG. GTP is bound by residues 435 to 439 and 489 to 492; these read DTPGH and NKID. The tract at residues 489–492 is G4; it reads NKID. Positions 525–527 are G5; sequence SAK.

The protein belongs to the TRAFAC class translation factor GTPase superfamily. Classic translation factor GTPase family. IF-2 subfamily.

Its subcellular location is the cytoplasm. In terms of biological role, one of the essential components for the initiation of protein synthesis. Protects formylmethionyl-tRNA from spontaneous hydrolysis and promotes its binding to the 30S ribosomal subunits. Also involved in the hydrolysis of GTP during the formation of the 70S ribosomal complex. The chain is Translation initiation factor IF-2 from Persephonella marina (strain DSM 14350 / EX-H1).